A 79-amino-acid polypeptide reads, in one-letter code: Sec-independent protein translocase protein TatA (79 aa).

The helical transmembrane segment at 1–21 (MGGISIWQLLIIALIVILLFG) threads the bilayer. The segment at 42 to 79 (AMTSETSEEEKKALEDSQTAQTSQQAEKKPESKDKEQA) is disordered. Polar residues predominate over residues 57–66 (DSQTAQTSQQ). Basic and acidic residues predominate over residues 67 to 79 (AEKKPESKDKEQA).

The protein belongs to the TatA/E family. The Tat system comprises two distinct complexes: a TatABC complex, containing multiple copies of TatA, TatB and TatC subunits, and a separate TatA complex, containing only TatA subunits. Substrates initially bind to the TatABC complex, which probably triggers association of the separate TatA complex to form the active translocon.

It is found in the cell inner membrane. In terms of biological role, part of the twin-arginine translocation (Tat) system that transports large folded proteins containing a characteristic twin-arginine motif in their signal peptide across membranes. TatA could form the protein-conducting channel of the Tat system. This is Sec-independent protein translocase protein TatA from Shewanella denitrificans (strain OS217 / ATCC BAA-1090 / DSM 15013).